Consider the following 526-residue polypeptide: Flavonoid 3'-monooxygenase CYP75B3 (526 aa).

The chain crosses the membrane as a helical span at residues 6–26 (LPLLLGSLAVSAAVWYLVYFL). A heme-binding site is contributed by Cys-461.

This sequence belongs to the cytochrome P450 family. The cofactor is heme.

Its subcellular location is the membrane. It catalyses the reaction a 3'-unsubstituted flavone + reduced [NADPH--hemoprotein reductase] + O2 = a 3'-hydroxyflavone + oxidized [NADPH--hemoprotein reductase] + H2O + H(+). It participates in secondary metabolite biosynthesis; flavonoid biosynthesis. Its function is as follows. Catalyzes the 3'-hydroxylation of the flavonoid B-ring to the 3',4'-hydroxylated state. Catalyzes the 3'-hydroxylation of apigenin to generate luteolin. The polypeptide is Flavonoid 3'-monooxygenase CYP75B3 (Oryza sativa subsp. japonica (Rice)).